The sequence spans 438 residues: uncharacterized protein (438 aa).

The N-terminal stretch at 1 to 32 (MARPLLGKTSSVRRRLESLSACSIFFFLRKFC) is a signal peptide.

This is an uncharacterized protein from Frog virus 3 (isolate Goorha) (FV-3).